The primary structure comprises 788 residues: Xylulose-5-phosphate phosphoketolase (788 aa).

Belongs to the XFP family. Homohexamer. Thiamine diphosphate serves as cofactor.

The enzyme catalyses D-xylulose 5-phosphate + phosphate = acetyl phosphate + D-glyceraldehyde 3-phosphate + H2O. This Lactiplantibacillus pentosus (Lactobacillus pentosus) protein is Xylulose-5-phosphate phosphoketolase (xpkA).